Consider the following 988-residue polypeptide: uncharacterized protein (988 aa).

Positions methionine 1–leucine 17 are cleaved as a signal peptide. The segment at tyrosine 111 to serine 176 is disordered. Low complexity predominate over residues proline 114 to threonine 140. N-linked (GlcNAc...) asparagine glycans are attached at residues asparagine 247, asparagine 389, asparagine 529, and asparagine 601. Residues isoleucine 690–leucine 710 form a helical membrane-spanning segment. A glycan (N-linked (GlcNAc...) asparagine) is linked at asparagine 720. A run of 6 helical transmembrane segments spans residues leucine 721–isoleucine 741, leucine 753–isoleucine 773, valine 784–leucine 804, methionine 832–leucine 852, leucine 864–isoleucine 884, and threonine 891–glycine 911. Residues arginine 966 to proline 988 are disordered. Asparagine 974 carries N-linked (GlcNAc...) asparagine glycosylation.

It localises to the membrane. This is an uncharacterized protein from Caenorhabditis elegans.